A 267-amino-acid polypeptide reads, in one-letter code: Phosphatidylcholine synthase (267 aa).

The Cytoplasmic portion of the chain corresponds to 1-42 (MILWRIVRPGAAMAYVQTGLVLIAEAMDTQQDSLKPRPAMRA). A helical transmembrane segment spans residues 43–63 (AAFSVHVFTAFGAAIALLAML). Residues 64–69 (EAVREH) are Periplasmic-facing. The helical transmembrane segment at 70-90 (WAAMFQWLGVALIIDAIDGPI) threads the bilayer. Over 91 to 102 (ARRLDVKNVQPN) the chain is Cytoplasmic. The helical transmembrane segment at 103 to 123 (WSGDVLDLVVDFVTYVFVPAY) threads the bilayer. A topological domain (periplasmic) is located at residue A124. The chain crosses the membrane as a helical span at residues 125–145 (IVASGLLLPVAAPLLGVAIIV). Over 146-162 (TSALYFADLRMKADDNH) the chain is Cytoplasmic. A helical transmembrane segment spans residues 163–183 (FRGFPALWNAAAFYLFLLHWP). A topological domain (periplasmic) is located at residue P184. Residues 185–205 (LWSTLLVAALVVLTFVPFHVL) traverse the membrane as a helical segment. Residues 206–215 (HPVRVVRLRW) are Cytoplasmic-facing. A helical transmembrane segment spans residues 216-236 (LTMSLIGIWAVLSLYTLDMDF). At 237-239 (RVG) the chain is on the periplasmic side. Residues 240-260 (PGVTLALCAIALWISFSDALI) form a helical membrane-spanning segment. The Cytoplasmic segment spans residues 261–267 (RFARSFA).

This sequence belongs to the CDP-alcohol phosphatidyltransferase class-I family. It depends on Mn(2+) as a cofactor.

It localises to the cell inner membrane. The enzyme catalyses a CDP-1,2-diacyl-sn-glycerol + choline = a 1,2-diacyl-sn-glycero-3-phosphocholine + CMP + H(+). Condenses choline with CDP-diglyceride to produce phosphatidylcholine and CMP. The chain is Phosphatidylcholine synthase from Bradyrhizobium diazoefficiens (strain JCM 10833 / BCRC 13528 / IAM 13628 / NBRC 14792 / USDA 110).